The following is a 315-amino-acid chain: Glutamyl-Q tRNA(Asp) synthetase (315 aa).

Residues 12-16 (RFAPS) and E48 contribute to the L-glutamate site. The 'HIGH' region motif lies at 15–25 (PSPSGPLHFGS). 4 residues coordinate Zn(2+): C104, C106, Y124, and C128. L-glutamate is bound by residues Y181 and R199. A 'KMSKS' region motif is present at residues 237 to 241 (KLSKQ). An ATP-binding site is contributed by K240.

This sequence belongs to the class-I aminoacyl-tRNA synthetase family. GluQ subfamily. It depends on Zn(2+) as a cofactor.

Its function is as follows. Catalyzes the tRNA-independent activation of glutamate in presence of ATP and the subsequent transfer of glutamate onto a tRNA(Asp). Glutamate is transferred on the 2-amino-5-(4,5-dihydroxy-2-cyclopenten-1-yl) moiety of the queuosine in the wobble position of the QUC anticodon. The polypeptide is Glutamyl-Q tRNA(Asp) synthetase (Aromatoleum aromaticum (strain DSM 19018 / LMG 30748 / EbN1) (Azoarcus sp. (strain EbN1))).